We begin with the raw amino-acid sequence, 315 residues long: Ribosomal protein L11 methyltransferase (315 aa).

S-adenosyl-L-methionine is bound by residues Thr162, Gly183, Asp205, and Asn248.

The protein belongs to the methyltransferase superfamily. PrmA family.

The protein resides in the cytoplasm. It catalyses the reaction L-lysyl-[protein] + 3 S-adenosyl-L-methionine = N(6),N(6),N(6)-trimethyl-L-lysyl-[protein] + 3 S-adenosyl-L-homocysteine + 3 H(+). In terms of biological role, methylates ribosomal protein L11. The polypeptide is Ribosomal protein L11 methyltransferase (Enterococcus faecalis (strain ATCC 700802 / V583)).